A 123-amino-acid polypeptide reads, in one-letter code: Small ribosomal subunit protein uS12 (123 aa).

Aspartate 89 carries the 3-methylthioaspartic acid modification. Positions 101 to 123 are disordered; the sequence is SLDTSGVKDRKQGRSKYGAKRPK. Over residues 113–123 the composition is skewed to basic residues; sequence GRSKYGAKRPK.

The protein belongs to the universal ribosomal protein uS12 family. As to quaternary structure, part of the 30S ribosomal subunit. Contacts proteins S8 and S17. May interact with IF1 in the 30S initiation complex.

With S4 and S5 plays an important role in translational accuracy. In terms of biological role, interacts with and stabilizes bases of the 16S rRNA that are involved in tRNA selection in the A site and with the mRNA backbone. Located at the interface of the 30S and 50S subunits, it traverses the body of the 30S subunit contacting proteins on the other side and probably holding the rRNA structure together. The combined cluster of proteins S8, S12 and S17 appears to hold together the shoulder and platform of the 30S subunit. This is Small ribosomal subunit protein uS12 from Stutzerimonas stutzeri (strain A1501) (Pseudomonas stutzeri).